A 28-amino-acid polypeptide reads, in one-letter code: Conotoxin Cl5.3 (28 aa).

It belongs to the conotoxin T superfamily. Post-translationally, contains 2 disulfide bonds that can be either 'C1-C3, C2-C4' or 'C1-C4, C2-C3', since these disulfide connectivities have been observed for conotoxins with cysteine framework V (for examples, see AC P0DQQ7 and AC P81755). As to expression, expressed by the venom duct.

Its subcellular location is the secreted. The protein is Conotoxin Cl5.3 of Californiconus californicus (California cone).